A 475-amino-acid polypeptide reads, in one-letter code: V-type ATP synthase beta chain (475 aa).

This sequence belongs to the ATPase alpha/beta chains family.

Produces ATP from ADP in the presence of a proton gradient across the membrane. The V-type beta chain is a regulatory subunit. The protein is V-type ATP synthase beta chain of Anaeromyxobacter dehalogenans (strain 2CP-C).